The sequence spans 172 residues: Adenine phosphoribosyltransferase (172 aa).

The protein belongs to the purine/pyrimidine phosphoribosyltransferase family. In terms of assembly, homodimer.

It localises to the cytoplasm. It catalyses the reaction AMP + diphosphate = 5-phospho-alpha-D-ribose 1-diphosphate + adenine. It participates in purine metabolism; AMP biosynthesis via salvage pathway; AMP from adenine: step 1/1. Its function is as follows. Catalyzes a salvage reaction resulting in the formation of AMP, that is energically less costly than de novo synthesis. This Clostridium botulinum (strain Alaska E43 / Type E3) protein is Adenine phosphoribosyltransferase.